Reading from the N-terminus, the 504-residue chain is DnaJ homolog subfamily C member 3 (504 aa).

The N-terminal stretch at 1–31 (MVAPGSVRSRLGAVFPFLLVLVDLQYEGAEC) is a signal peptide. 9 TPR repeats span residues 37–70 (VEKHLELGKKLLAAGQLADALSQFHAAVDGDPDN), 72–104 (IAYYRRATVFLAMGKSKAALPDLTRVIELKMDF), 105–138 (TAARLQRGHLLLKQGRLAEAEDDFKKVLKSNPSE), 154–187 (MQRLRAQALDAFDSADYTAAITFLDEILEVCVWD), 188–221 (AELRELRAECFIKEGEPRKAISDLKAASKLKNDN), 222–255 (TEAFYKISILYYQLGDHELSLSEVRECLKLDQDH), 268–301 (LNKLIGSAEELIRDGRYTDATSKYESVMKAEPSV), 306–339 (VRSKERICHCFSKDEKPVEAIKICSEVLQLEPDN), and 340–373 (VNALKDRAEAYLIEEMYDEAIQDYEAAQEQNEND). C248 and C258 are oxidised to a cystine. Residue S274 is modified to Phosphoserine. Cysteines 313 and 329 form a disulfide. Residues 375–393 (QIREGLEKAQRLLKQSQKR) form a flexible linker region. The region spanning 394-462 (DYYKILGVKR…EMRRKFDDGE (69 aa)) is the J domain. Residues 451–481 (DPEMRRKFDDGEDPLDAETQQGGGSNPFHRS) are disordered. S475 is modified (phosphoserine).

In terms of assembly, interacts with EIF2AK2 and EIF2AK3. Forms a trimeric complex with DNAJB1 and HSPA8. Interacts with THAP12.

It localises to the endoplasmic reticulum. Functionally, involved in the unfolded protein response (UPR) during ER stress. Co-chaperone of HSPA8/HSC70, it stimulates its ATPase activity. May inhibit both the autophosphorylation of EIF2AK2/PKR and the ability of EIF2AK2 to catalyze phosphorylation of the EIF2A. May inhibit EIF2AK3/PERK activity. The polypeptide is DnaJ homolog subfamily C member 3 (Dnajc3) (Rattus norvegicus (Rat)).